The chain runs to 126 residues: uncharacterized protein (126 aa).

A helical transmembrane segment spans residues 48 to 68; that stretch reads ILCMFPWQCVVYVFSNFVWLV.

It localises to the membrane. This is an uncharacterized protein from Homo sapiens (Human).